We begin with the raw amino-acid sequence, 319 residues long: Carboxylesterase NlhH (319 aa).

The Involved in the stabilization of the negatively charged intermediate by the formation of the oxyanion hole signature appears at 88 to 90 (HGG). Residues serine 162, aspartate 260, and histidine 290 contribute to the active site.

The protein belongs to the 'GDXG' lipolytic enzyme family. As to quaternary structure, monomer.

It catalyses the reaction a carboxylic ester + H2O = an alcohol + a carboxylate + H(+). Functionally, hydrolyzes various short-chain esters. The chain is Carboxylesterase NlhH (nlhH) from Mycobacterium tuberculosis (strain CDC 1551 / Oshkosh).